A 504-amino-acid polypeptide reads, in one-letter code: Anaerobic nitric oxide reductase transcription regulator NorR (504 aa).

Asp-57 carries the 4-aspartylphosphate modification. Residues 187–416 (MIGLSPGMTQ…LEHAIHRAVV (230 aa)) form the Sigma-54 factor interaction domain. ATP contacts are provided by residues 215 to 222 (GETGTGKE) and 278 to 287 (ADNGTLFLDE). A DNA-binding region (H-T-H motif) is located at residues 479–498 (WAACARMLETDVANLHRLAK).

It participates in nitrogen metabolism; nitric oxide reduction. Functionally, required for the expression of anaerobic nitric oxide (NO) reductase, acts as a transcriptional activator for at least the norVW operon. Activation also requires sigma-54. The sequence is that of Anaerobic nitric oxide reductase transcription regulator NorR from Escherichia coli (strain 55989 / EAEC).